The primary structure comprises 193 residues: Ion-translocating oxidoreductase complex subunit A (193 aa).

Transmembrane regions (helical) follow at residues 5–25 (LLLF…FLGL), 47–67 (FVMT…LIPL), 72–92 (LRTL…EMVV), 102–122 (LLGI…VALL), 134–154 (ALYG…FAAI), and 171–191 (AIAL…SGLV).

It belongs to the NqrDE/RnfAE family. As to quaternary structure, the complex is composed of six subunits: RsxA, RsxB, RsxC, RsxD, RsxE and RsxG.

The protein resides in the cell inner membrane. Part of a membrane-bound complex that couples electron transfer with translocation of ions across the membrane. Required to maintain the reduced state of SoxR. This is Ion-translocating oxidoreductase complex subunit A from Salmonella agona (strain SL483).